The following is a 112-amino-acid chain: cAMP-regulated phosphoprotein 19 (112 aa).

An N-acetylmethionine modification is found at Met-1. Over residues 1 to 11 the composition is skewed to low complexity; that stretch reads MSAEVPEAASA. The interval 1–49 is disordered; that stretch reads MSAEVPEAASAEEQKEMEDKVTSPEKAEEAKLKARYPHLGQKPGGSDFL. Ser-2 is subject to N-acetylserine. Ser-2 and Ser-23 each carry phosphoserine. The segment covering 12 to 32 has biased composition (basic and acidic residues); the sequence is EEQKEMEDKVTSPEKAEEAKL. Residues Ser-62 and Ser-104 each carry the phosphoserine; by GWL modification. Residues 72–112 form a disordered region; it reads MKNKQLPTATPDKTEVTGDHIPTPQDLPQRKPSLVASKLAG. The residue at position 104 (Ser-104) is a Phosphoserine; by PKA. N6-acetyllysine is present on Lys-109.

Interacts (when phosphorylated at Ser-62) with PPP2R2D. Interacts with SNCA. Interacts with PPP2R2A; the interaction is direct and this interaction inhibits PP2A activity. Post-translationally, phosphorylation at Ser-62 by MASTL/GWL during mitosis is essential for interaction with PPP2R2D (PR55-delta) and subsequent inactivation of PP2A. Phosphorylated by PKA. In terms of tissue distribution, isoform ARPP-19 is found in all brain regions and also present in non-neuronal tissues. Isoform ARPP-16 is enriched in the caudate nucleus, found in low levels in cerebral cortex.

It is found in the cytoplasm. In terms of biological role, protein phosphatase inhibitor that specifically inhibits protein phosphatase 2A (PP2A) during mitosis. Inhibition of PP2A is enhanced when ARPP19 is phosphorylated. When phosphorylated at Ser-62 during mitosis, specifically interacts with PPP2R2D (PR55-delta) and inhibits its activity, leading to inactivation of PP2A, an essential condition to keep cyclin-B1-CDK1 activity high during M phase. May indirectly enhance GAP-43 expression. The chain is cAMP-regulated phosphoprotein 19 (ARPP19) from Bos taurus (Bovine).